The chain runs to 424 residues: Protein shisa-9 (424 aa).

Positions 1–23 are cleaved as a signal peptide; the sequence is MRRVLRLLLGCFLTELCARVCRA. At 24–149 the chain is on the extracellular side; the sequence is QERAGHGQLA…DPLHDPTKDK (126 aa). 3 N-linked (GlcNAc...) asparagine glycosylation sites follow: Asn-45, Asn-89, and Asn-116. Residues 150–170 form a helical membrane-spanning segment; it reads TNLIVYIICGVVAVMVLVGIF. The Cytoplasmic portion of the chain corresponds to 171-424; sequence TKLGLEKAHR…ITNSKTEVTV (254 aa). Residues 333–424 form a disordered region; it reads PRAFSPEHGP…ITNSKTEVTV (92 aa). The segment covering 414–424 has biased composition (polar residues); the sequence is FITNSKTEVTV.

It belongs to the shisa family. SHISA9 subfamily. In terms of assembly, component of some AMPA receptors (ionotropic glutamate receptors) complex, at least composed of some AMPA receptor (GRIA1, GRIA2 and/or GRIA3), CACNG2 and SHISA9, as well as low level of DLG4.

It is found in the cell projection. The protein resides in the dendritic spine membrane. It localises to the synapse. Its function is as follows. Regulator of short-term neuronal synaptic plasticity in the dentate gyrus. Associates with AMPA receptors (ionotropic glutamate receptors) in synaptic spines and promotes AMPA receptor desensitization at excitatory synapses. The sequence is that of Protein shisa-9 (SHISA9) from Homo sapiens (Human).